Consider the following 174-residue polypeptide: Adenine phosphoribosyltransferase (174 aa).

It belongs to the purine/pyrimidine phosphoribosyltransferase family. As to quaternary structure, homodimer.

The protein localises to the cytoplasm. It carries out the reaction AMP + diphosphate = 5-phospho-alpha-D-ribose 1-diphosphate + adenine. The protein operates within purine metabolism; AMP biosynthesis via salvage pathway; AMP from adenine: step 1/1. In terms of biological role, catalyzes a salvage reaction resulting in the formation of AMP, that is energically less costly than de novo synthesis. This is Adenine phosphoribosyltransferase from Mycobacterium sp. (strain JLS).